A 152-amino-acid chain; its full sequence is Transcriptional regulator MraZ (152 aa).

SpoVT-AbrB domains are found at residues 5–52 (ATLV…PLPE) and 81–124 (ASEC…DETT).

This sequence belongs to the MraZ family. In terms of assembly, forms oligomers.

The protein resides in the cytoplasm. Its subcellular location is the nucleoid. Its function is as follows. Negatively regulates its own expression and that of the subsequent genes in the proximal part of the division and cell wall (dcw) gene cluster. Acts by binding directly to DNA. May also regulate the expression of genes outside the dcw cluster. This is Transcriptional regulator MraZ from Salmonella paratyphi A (strain ATCC 9150 / SARB42).